A 405-amino-acid polypeptide reads, in one-letter code: Neisseria adhesin A (405 aa).

The signal sequence occupies residues 1–23; that stretch reads MKHFPSKVLTTAILATFCSGALA. The head domain stretch occupies residues 24-87; the sequence is ATNDDDVKKA…ADDFKGLGLK (64 aa). 2 coiled-coil regions span residues 87–170 and 181–329; these read KKVV…KLEA and AFND…LRKE. Positions 88–350 are coiled stalk domain; it reads KVVTNLTKTV…SGLFQPYNVG (263 aa). The segment at 312-350 is outer membrane translocation of the passenger domain; sequence HDTRLNGLDKTVSDLRKETRQGLAEQAALSGLFQPYNVG. 4 beta stranded membrane passes run 350-360, 364-375, 382-388, and 394-405; these read GRFNVTAAVGG, ESAVAIGTGFRF, KAGVAVG, and SAAYHVGVNYEW. The translocator domain stretch occupies residues 351–405; sequence RFNVTAAVGGYKSESAVAIGTGFRFTENFAAKAGVAVGTSSGSSAAYHVGVNYEW.

It belongs to the autotransporter-2 (AT-2) (TC 1.B.40) family. In terms of assembly, the non-membrane anchored protein (residues 24-350) probably forms a homotrimer; it is assumed the mature protein forms trimers in situ. The mature protein without the membrane-targeting segment (residues 24-350) binds to human heat shock 90 beta protein (HSP90AB1) both in vitro and when incubated with human monocytes. A subsequent paper showed binding of the same fragment in epithelial cells to both HSP90AA1 and HSP90AB1; in vitro the interaction is stabilized by ADP and the Hsp90 inhibitor 17-AAG (17-N-allylamino-17-demethoxygeldanamycin), in vitro and in vivo both interactions are inhibited by ATP. Binds human oxidized low-density lipoprotein receptor 1 (LOX-1, OLR1) in protein microarrays, in solution and when LOX-1 is expressed on the cell surface. Binds via the head and the beginning of the coiled stalk (residues 24-170); binding can be abrogated by monoclonal antibodies against those specific regions of NadA. Other potential binding partners were identified but not characterized in the same study. Forms high molecular weight oligomers in whole cell extracts that are not disrupted by boiling in SDS buffer.

It localises to the cell outer membrane. Its subcellular location is the cell surface. In terms of biological role, adheres to and induces bacterial uptake by human epithelial cells in a microfilament-dependent process. Binding is reduced by pronase treatment, suggesting there is a protein receptor on the human cells. Possible human protein receptors include integrin beta-1 (ITGB1) and oxidized low-density lipoprotein receptor 1 (OLR1). Binds to extracellular human Hsp90 (preferentially the beta isoform, HSP90AB1) on monocytes, binding stimulates monocytes in a TLR4-dependent fashion, polymixin B, which binds NadA, blocks the activation. Hsp90 is probably not the first receptor on human monocytes. Non-membrane anchored protein (residues 24-350) is internalized into human epithelial cells by hijacking the endosome recycling pathway and may be recycled back to the cell surface, which might aid transcellular trafficking of the bacteria. A bacterial cell surface protein; antisera against this protein induce complement-mediated killing of this and other strains. The polypeptide is Neisseria adhesin A (Neisseria meningitidis serogroup B).